Reading from the N-terminus, the 158-residue chain is SsrA-binding protein (158 aa).

This sequence belongs to the SmpB family.

The protein resides in the cytoplasm. In terms of biological role, required for rescue of stalled ribosomes mediated by trans-translation. Binds to transfer-messenger RNA (tmRNA), required for stable association of tmRNA with ribosomes. tmRNA and SmpB together mimic tRNA shape, replacing the anticodon stem-loop with SmpB. tmRNA is encoded by the ssrA gene; the 2 termini fold to resemble tRNA(Ala) and it encodes a 'tag peptide', a short internal open reading frame. During trans-translation Ala-aminoacylated tmRNA acts like a tRNA, entering the A-site of stalled ribosomes, displacing the stalled mRNA. The ribosome then switches to translate the ORF on the tmRNA; the nascent peptide is terminated with the 'tag peptide' encoded by the tmRNA and targeted for degradation. The ribosome is freed to recommence translation, which seems to be the essential function of trans-translation. This is SsrA-binding protein from Roseiflexus castenholzii (strain DSM 13941 / HLO8).